The primary structure comprises 176 residues: Large ribosomal subunit protein uL6 (176 aa).

This sequence belongs to the universal ribosomal protein uL6 family. In terms of assembly, part of the 50S ribosomal subunit.

Its function is as follows. This protein binds to the 23S rRNA, and is important in its secondary structure. It is located near the subunit interface in the base of the L7/L12 stalk, and near the tRNA binding site of the peptidyltransferase center. The chain is Large ribosomal subunit protein uL6 from Lactobacillus acidophilus (strain ATCC 700396 / NCK56 / N2 / NCFM).